The primary structure comprises 871 residues: Alanine--tRNA ligase (871 aa).

4 residues coordinate Zn(2+): His-559, His-563, Cys-661, and His-665.

This sequence belongs to the class-II aminoacyl-tRNA synthetase family. The cofactor is Zn(2+).

It is found in the cytoplasm. The catalysed reaction is tRNA(Ala) + L-alanine + ATP = L-alanyl-tRNA(Ala) + AMP + diphosphate. Its function is as follows. Catalyzes the attachment of alanine to tRNA(Ala) in a two-step reaction: alanine is first activated by ATP to form Ala-AMP and then transferred to the acceptor end of tRNA(Ala). Also edits incorrectly charged Ser-tRNA(Ala) and Gly-tRNA(Ala) via its editing domain. This chain is Alanine--tRNA ligase, found in Aquifex pyrophilus.